A 3658-amino-acid polypeptide reads, in one-letter code: Serine/threonine-protein kinase SMG1 (3658 aa).

Disordered regions lie at residues 1-99 (MSRR…TYGR) and 116-142 (FTSV…MSYS). Positions 24 to 33 (NDWQPRTDSA) are enriched in polar residues. Basic and acidic residues-rich tracts occupy residues 67–84 (QRHD…DEKG) and 127–136 (ATKDMRKSQE). The residue at position 171 (lysine 171) is an N6-acetyllysine. The region spanning 1281-1864 (RELQKSIEVQ…LYPAIVGTIS (584 aa)) is the FAT domain. The stretch at 1815-1850 (APWRGIIPQLFSRLNHPEVYVRQSICNLLCRVAQDS) is one HEAT repeat. A disordered region spans residues 1896–1917 (ECEGGSPPASQDSNKDEPKSGL). A PI3K/PI4K catalytic domain is found at 2122–2461 (VGGTITILPT…MEREITRSLF (340 aa)). Residues 2128–2134 (ILPTKTK) are G-loop. The segment at 2330–2338 (GLGDRHLDN) is catalytic loop. Positions 2350 to 2374 (HIDYNVCFEKGKSLRVPEKVPFRMT) are activation loop. Threonine 3547 bears the Phosphothreonine mark. Residues serine 3553 and serine 3567 each carry the phosphoserine modification. Residues 3565–3576 (ATSADTPPSTIP) are compositionally biased toward polar residues. The tract at residues 3565–3588 (ATSADTPPSTIPGTGKSIACSPKK) is disordered. A phosphothreonine mark is found at threonine 3570 and threonine 3574. The 33-residue stretch at 3626–3658 (RRMSVAEQVDYVIKEATNLDNLAQLYEGWTAWV) folds into the FATC domain.

It belongs to the PI3/PI4-kinase family. Component of the SMG1C complex composed of SMG1, SMG8 and SMG9; the recruitment of SMG8 to SMG1 N-terminus induces a large conformational change in the SMG1 C-terminal head domain containing the catalytic domain. Component of the transient SURF (SMG1-UPF1-eRF1-eRF3) complex. Part of a complex composed of SMG1, DHX34 and UPF1; within the complex DHX34 acts as a scaffolding protein to facilitate SMG1 phosphorylation of UPF1. Interacts with PRKCI. Interacts with TELO2 and TTI1. Interacts with RUVBL1 and RUVBL2. Interacts with DHX34 (via C-terminus); the interaction is RNA-independent. Requires Mn(2+) as cofactor. Autophosphorylated.

It localises to the nucleus. The protein localises to the cytoplasm. The catalysed reaction is L-seryl-[protein] + ATP = O-phospho-L-seryl-[protein] + ADP + H(+). The enzyme catalyses L-threonyl-[protein] + ATP = O-phospho-L-threonyl-[protein] + ADP + H(+). With respect to regulation, inhibited by caffeine, LY294002 and wortmannin. Functionally, serine/threonine protein kinase involved in both mRNA surveillance and genotoxic stress response pathways. Recognizes the substrate consensus sequence [ST]-Q. Plays a central role in nonsense-mediated decay (NMD) of mRNAs containing premature stop codons by phosphorylating UPF1/RENT1. Recruited by release factors to stalled ribosomes together with SMG8 and SMG9 (forming the SMG1C protein kinase complex), and UPF1 to form the transient SURF (SMG1-UPF1-eRF1-eRF3) complex. In EJC-dependent NMD, the SURF complex associates with the exon junction complex (EJC) through UPF2 and allows the formation of an UPF1-UPF2-UPF3 surveillance complex which is believed to activate NMD. Also acts as a genotoxic stress-activated protein kinase that displays some functional overlap with ATM. Can phosphorylate p53/TP53 and is required for optimal p53/TP53 activation after cellular exposure to genotoxic stress. Its depletion leads to spontaneous DNA damage and increased sensitivity to ionizing radiation (IR). May activate PRKCI but not PRKCZ. The protein is Serine/threonine-protein kinase SMG1 of Mus musculus (Mouse).